Here is a 271-residue protein sequence, read N- to C-terminus: Phosphonoacetaldehyde hydrolase (271 aa).

Asp-12 serves as the catalytic Nucleophile. Asp-12 and Ala-14 together coordinate Mg(2+). The active-site Schiff-base intermediate with substrate is Lys-54. Asp-188 lines the Mg(2+) pocket.

The protein belongs to the HAD-like hydrolase superfamily. PhnX family. In terms of assembly, homodimer. Requires Mg(2+) as cofactor.

It catalyses the reaction phosphonoacetaldehyde + H2O = acetaldehyde + phosphate + H(+). Involved in phosphonate degradation. The protein is Phosphonoacetaldehyde hydrolase of Vibrio parahaemolyticus serotype O3:K6 (strain RIMD 2210633).